Here is a 136-residue protein sequence, read N- to C-terminus: Large ribosomal subunit protein uL16 (136 aa).

The protein belongs to the universal ribosomal protein uL16 family. In terms of assembly, part of the 50S ribosomal subunit.

Its function is as follows. Binds 23S rRNA and is also seen to make contacts with the A and possibly P site tRNAs. In Haemophilus influenzae (strain 86-028NP), this protein is Large ribosomal subunit protein uL16.